Consider the following 379-residue polypeptide: GDP-mannose transporter 1 (379 aa).

At 1 to 39 (MTDNRKPEDYTIEMDKLGQNKNYQAPPPPPQPRSSTASS) the chain is on the cytoplasmic side. Residues 17–38 (LGQNKNYQAPPPPPQPRSSTAS) form a disordered region. The helical transmembrane segment at 40–60 (ISNNAALSVLAYCGSSILMTV) threads the bilayer. The Lumenal segment spans residues 61-69 (MNKYVLSSD). A helical transmembrane segment spans residues 70-90 (FNLNFFLLCVQSLVCIIAIQL). Residues 91 to 110 (CKACGLITYRDFNLDEARKW) lie on the Cytoplasmic side of the membrane. A helical transmembrane segment spans residues 111-133 (FPITLLLIGMIYTGSKALQFLSI). At 134-136 (PVY) the chain is on the lumenal side. Residues 137-156 (TIFKNLTIILIAYGEVLWFG) form a helical membrane-spanning segment. At 157-162 (GSVTNL) the chain is on the cytoplasmic side. The helical transmembrane segment at 163 to 182 (TLFSFGLMVFSSIIAAWADI) threads the bilayer. At 183-198 (KHAIESSGDATSKVST) the chain is on the lumenal side. The helical transmembrane segment at 199–219 (LNAGYIWMLINCLCTSSYVLG) threads the bilayer. Over 220–233 (MRKRIKLTNFKDFD) the chain is Cytoplasmic. Residues 234–254 (TMFYNNLLSIPVLIVCSGILE) form a helical membrane-spanning segment. The Lumenal segment spans residues 255–272 (DWSPANVARNFPSADRNG). The helical transmembrane segment at 273 to 293 (IMFAMILSGLSTVFISYTSAW) threads the bilayer. The Cytoplasmic portion of the chain corresponds to 294 to 301 (CVRVTSST). Residues 302–322 (TYSMVGALNKLPIALSGLIFF) form a helical membrane-spanning segment. Residues 323-325 (DAP) are Lumenal-facing. Residues 326–346 (VTFPSVSAIMVGFVSGIVYAV) traverse the membrane as a helical segment. Residues 347 to 379 (AKIKQNAKPKVGILPTTNPVSASSQSMRDSLRS) lie on the Cytoplasmic side of the membrane.

This sequence belongs to the TPT transporter family. SLC35D subfamily. In terms of assembly, homooligomer.

The protein resides in the golgi apparatus membrane. It is found in the cytoplasmic vesicle membrane. It localises to the endoplasmic reticulum membrane. Involved in the import of GDP-mannose from the cytoplasm into the Golgi lumen. The chain is GDP-mannose transporter 1 (gmt1) from Emericella nidulans (strain FGSC A4 / ATCC 38163 / CBS 112.46 / NRRL 194 / M139) (Aspergillus nidulans).